The chain runs to 886 residues: Vam6/Vps39-like protein (886 aa).

The CNH domain maps to 15 to 294 (PLQIDCLAAW…RFITSGGSNI (280 aa)). One copy of the CHCR repeat lies at 573 to 750 (FTEDLPEVES…LLRMYLSPPS (178 aa)).

It belongs to the VAM6/VPS39 family. In terms of assembly, homooligomer. Interacts with TGFBR2 and, less efficiently, with TGFBR1; interaction with TGFBR2 is independent of the receptor kinase activity and of the presence of TGF-beta. Also interacts with ACVR2B, but not with BMPR2. Interacts with SMAD4, preferentially following TGF-beta treatment. Does not interact with SAMD2 or SMAD3. Component of the homotypic fusion and vacuole protein sorting (HOPS) complex; the core of which composed of the class C Vps proteins VPS11, VPS16, VPS18 and VPS33A, is associated with VPS39 and VPS41. Interacts with PLEKHM2; involved in VPS39 recruitment to ARL8B-containing lysosomes. Associates with adapter protein complex 3 (AP-3) and clathrin:AP-3 complexes. Interacts with STX17; this interaction is increased in the absence of TMEM39A. Interacts with RAB7, RAB2A and RAB2B. Interacts with RAB2A (GTP-bound); the interaction contributes to obtaining a functional HOPS complex that promotes autophagosome-lysosome membrane fusion driven by STX17-SNAP29-VAMP8. Interacts with RAB39A (GTP-bound) and RAB39B (GTP-bound); interaction with RAB39A contributes to obtaining a functional HOPS complex. As to quaternary structure, (Microbial infection) Interacts with SARS coronavirus-2/SARS-CoV-2 ORF3A protein; the interaction is direct and sequestrates VPS39, thereby preventing HOPS complex from interacting with the autophagosomal SNARE protein STX17. ORF3A enhances the interaction of VPS39 with VPS11 and VPS18, while its interaction with the VPS16:VPS33A module is attenuated. As to expression, widely expressed, with highest levels in heart, skeletal muscle, kidney, pancreas, brain, placenta and spleen.

It is found in the cytoplasm. It localises to the lysosome membrane. The protein resides in the late endosome membrane. Regulator of TGF-beta/activin signaling, inhibiting SMAD3- and activating SMAD2-dependent transcription. Acts by interfering with SMAD3/SMAD4 complex formation, this would lead to inhibition of SMAD3-dependent transcription and relieve SMAD3 inhibition of SMAD2-dependent promoters, thus increasing SMAD2-dependent transcription. Does not affect TGF-beta-induced SMAD2 or SMAD3 phosphorylation, nor SMAD2/SMAD4 complex formation. Functionally, plays a role in vesicle-mediated protein trafficking to lysosomal compartments including the endocytic membrane transport and autophagic pathways. Acts as a component of the HOPS endosomal tethering complex. This complex is proposed to be involved in the Rab5-to-Rab7 endosome conversion probably implicating MON1A/B, and via binding SNAREs and SNARE complexes to mediate tethering and docking events during SNARE-mediated membrane fusion. The HOPS complex is proposed to be recruited to Rab7 on the late endosomal membrane and to regulate late endocytic, phagocytic and autophagic traffic towards lysosomes. Involved in homotypic vesicle fusions between late endosomes and in heterotypic fusions between late endosomes and lysosomes. Required for fusion of endosomes and autophagosomes with lysosomes. This Homo sapiens (Human) protein is Vam6/Vps39-like protein.